Reading from the N-terminus, the 223-residue chain is MGQKINPTGFRVGVIRDWDAKWFADKADYANQLHEDLRIRKYIEKNLADAAVDRIEIERSTKSRVDVSVHTAKPGMVIGKGGSEVEKLRTQLAKLTDRDEKGRSKRVFINIVEIKKPDLSAHLVGQQIAGDLERRVAFRRAMRGAIQRATRSGAKGIKVMVSGRLNGADIARIEQYTEGTVPLHTLRADIDYSWDEAMTAYGNLGIKTWIYRGDILPQKKNSK.

The KH type-2 domain maps to 39–115 (IRKYIEKNLA…RVFINIVEIK (77 aa)).

This sequence belongs to the universal ribosomal protein uS3 family. Part of the 30S ribosomal subunit. Forms a tight complex with proteins S10 and S14.

Binds the lower part of the 30S subunit head. Binds mRNA in the 70S ribosome, positioning it for translation. The protein is Small ribosomal subunit protein uS3 of Leuconostoc citreum (strain KM20).